The following is an 88-amino-acid chain: Small ribosomal subunit protein uS12 (88 aa).

The disordered stretch occupies residues 1 to 24 (RKGRRDKIGKVKTAALKGSPQRRG). At aspartate 81 the chain carries 3-methylthioaspartic acid.

Belongs to the universal ribosomal protein uS12 family. As to quaternary structure, part of the 30S ribosomal subunit. Contacts proteins S8 and S17. May interact with IF1 in the 30S initiation complex.

Functionally, with S4 and S5 plays an important role in translational accuracy. Interacts with and stabilizes bases of the 16S rRNA that are involved in tRNA selection in the A site and with the mRNA backbone. Located at the interface of the 30S and 50S subunits, it traverses the body of the 30S subunit contacting proteins on the other side and probably holding the rRNA structure together. The combined cluster of proteins S8, S12 and S17 appears to hold together the shoulder and platform of the 30S subunit. This is Small ribosomal subunit protein uS12 (rpsL) from Mycobacterium szulgai.